A 241-amino-acid chain; its full sequence is Xyloglucan-specific endo-beta-1,4-glucanase 1 (241 aa).

Residues 1 to 19 (MKGLLAGTIAAATFAVASA) form the signal peptide. The active site involves Glu136. 2 N-linked (GlcNAc...) asparagine glycosylation sites follow: Asn174 and Asn190. Glu222 is an active-site residue.

This sequence belongs to the glycosyl hydrolase 12 (cellulase H) family. As to quaternary structure, interacts with host apoplastic glucanase inhibitor GIP2.

It carries out the reaction xyloglucan + H2O = xyloglucan oligosaccharides.. The xyloglucanase activity is inhibited by the binding of the host apoplastic glucanase inhibitor GIP2. In terms of biological role, glycoside hydrolase that exhibits xyloglucanase activity. Acts as an important virulence factor during P.parasitica infection of its host Nicotiana benthamiana. Also acts as a pathogen-associated molecular pattern (PAMP) in host species, where it can trigger defense responses including cell death. The PAMP activity is independent of its xyloglucanase activity. With paralog XLP1, is required to elevate apoplastic sugar during P.parasitica infection. This Phytophthora nicotianae (strain INRA-310) (Phytophthora parasitica) protein is Xyloglucan-specific endo-beta-1,4-glucanase 1.